The following is a 151-amino-acid chain: NPC intracellular cholesterol transporter 2 (151 aa).

Residues 1–19 (MRFLAATFLLLALSTAAQA) form the signal peptide. Intrachain disulfides connect Cys-27-Cys-140, Cys-42-Cys-47, and Cys-93-Cys-99. Asn-58 is a glycosylation site (N-linked (GlcNAc...) asparagine). Lys-116 carries the N6-acetyllysine modification. The N-linked (GlcNAc...) asparagine glycan is linked to Asn-135.

This sequence belongs to the NPC2 family. As to quaternary structure, interacts with NPC1 (via the second lumenal domain) in a cholestrol-dependent manner. Interacts with NUS1/NgBR, the interaction stabilizes NCP2 and regulates cholesterol trafficking. Interacts with DHDDS. Interacts with NEDD4L (via C2 domain). Interacts with NPC1L1. In terms of tissue distribution, detected in gallbladder bile. Detected in fibroblasts, kidney, liver, spleen, small intestine, placenta and testis (at protein level). Epididymis.

It localises to the secreted. The protein localises to the endoplasmic reticulum. Its subcellular location is the lysosome. The enzyme catalyses cholesterol(in) = cholesterol(out). In terms of biological role, intracellular cholesterol transporter which acts in concert with NPC1 and plays an important role in the egress of cholesterol from the lysosomal compartment. Unesterified cholesterol that has been released from LDLs in the lumen of the late endosomes/lysosomes is transferred by NPC2 to the cholesterol-binding pocket in the N-terminal domain of NPC1. May bind and mobilize cholesterol that is associated with membranes. NPC2 binds cholesterol with a 1:1 stoichiometry. Can bind a variety of sterols, including lathosterol, desmosterol and the plant sterols stigmasterol and beta-sitosterol. The secreted form of NCP2 regulates biliary cholesterol secretion via stimulation of ABCG5/ABCG8-mediated cholesterol transport. The protein is NPC intracellular cholesterol transporter 2 of Homo sapiens (Human).